A 293-amino-acid chain; its full sequence is Glycine--tRNA ligase alpha subunit (293 aa).

The protein belongs to the class-II aminoacyl-tRNA synthetase family. As to quaternary structure, tetramer of two alpha and two beta subunits.

The protein resides in the cytoplasm. The catalysed reaction is tRNA(Gly) + glycine + ATP = glycyl-tRNA(Gly) + AMP + diphosphate. This is Glycine--tRNA ligase alpha subunit from Aliarcobacter butzleri (strain RM4018) (Arcobacter butzleri).